A 73-amino-acid chain; its full sequence is Putative defensin-like protein 57 (73 aa).

The N-terminal stretch at 1 to 25 (MRFTSMIFVLVVILINSLFNFNVLA) is a signal peptide. 4 disulfides stabilise this stretch: Cys37-Cys71, Cys41-Cys64, Cys50-Cys69, and Cys54-Cys70.

It belongs to the DEFL family.

It localises to the secreted. This is Putative defensin-like protein 57 from Arabidopsis thaliana (Mouse-ear cress).